Reading from the N-terminus, the 460-residue chain is UDP-N-acetylmuramate--L-alanine ligase (460 aa).

112–118 (GTHGKTT) provides a ligand contact to ATP.

It belongs to the MurCDEF family.

The protein localises to the cytoplasm. It carries out the reaction UDP-N-acetyl-alpha-D-muramate + L-alanine + ATP = UDP-N-acetyl-alpha-D-muramoyl-L-alanine + ADP + phosphate + H(+). It functions in the pathway cell wall biogenesis; peptidoglycan biosynthesis. Cell wall formation. The polypeptide is UDP-N-acetylmuramate--L-alanine ligase (Pelobacter propionicus (strain DSM 2379 / NBRC 103807 / OttBd1)).